Consider the following 576-residue polypeptide: Arginine--tRNA ligase (576 aa).

Residues 122–132 (PNVAKEMHVGH) carry the 'HIGH' region motif.

Belongs to the class-I aminoacyl-tRNA synthetase family. In terms of assembly, monomer.

The protein localises to the cytoplasm. It catalyses the reaction tRNA(Arg) + L-arginine + ATP = L-arginyl-tRNA(Arg) + AMP + diphosphate. The chain is Arginine--tRNA ligase from Erwinia tasmaniensis (strain DSM 17950 / CFBP 7177 / CIP 109463 / NCPPB 4357 / Et1/99).